We begin with the raw amino-acid sequence, 92 residues long: DNA-binding protein HU 1 (92 aa).

Position 4 is a phosphothreonine (T4).

Belongs to the bacterial histone-like protein family. In terms of assembly, homodimer. As to quaternary structure, (Microbial infection) Interacts with Bacillus phage SP01 Gp46; the interaction replaces dsDNA from the hbs-DNA complex.

It localises to the cytoplasm. Its subcellular location is the nucleoid. Histone-like DNA-binding protein which introduces negative supercoils in relaxed plasmid DNA in the presence of topoisomerase I. There are at least 20,000 monomers/cell. Capable of wrapping DNA to stabilize it, and thus to prevent its denaturation under extreme environmental conditions. Binds evenly across chromosome, does not display a preference for AT content. Binds ss- and dsDNA in a sequence non-specific manner; 8 nucleotides are sufficient to bind protein. The sequence is that of DNA-binding protein HU 1 from Bacillus subtilis (strain 168).